Consider the following 37-residue polypeptide: Large ribosomal subunit protein bL36 (37 aa).

This sequence belongs to the bacterial ribosomal protein bL36 family.

In Variovorax paradoxus (strain S110), this protein is Large ribosomal subunit protein bL36.